A 204-amino-acid chain; its full sequence is Inner membrane-spanning protein YciB (204 aa).

5 helical membrane-spanning segments follow: residues 48–68, 73–93, 102–122, 147–167, and 170–190; these read ILFATAIAILASVLQVGLYFF, FESMHLVTLGLVVVLGGATLM, WKPTVVNWLFGLAFLASQLFT, GAWIIFFLVSGLANLYVAYAF, and AVWVNFKLFGMLGLTLLFVVG.

The protein belongs to the YciB family.

Its subcellular location is the cell inner membrane. In terms of biological role, plays a role in cell envelope biogenesis, maintenance of cell envelope integrity and membrane homeostasis. The chain is Inner membrane-spanning protein YciB from Nitrosococcus oceani (strain ATCC 19707 / BCRC 17464 / JCM 30415 / NCIMB 11848 / C-107).